The primary structure comprises 727 residues: Catalase-peroxidase (727 aa).

A cross-link (tryptophyl-tyrosyl-methioninium (Trp-Tyr) (with M-244)) is located at residues 95–218 (WHSAGTYRII…LAAVQMGLIY (124 aa)). His-96 acts as the Proton acceptor in catalysis. The segment at residues 218 to 244 (YVNPEGPNGEPDVLGAAKDIKESFGKM) is a cross-link (tryptophyl-tyrosyl-methioninium (Tyr-Met) (with W-95)). His-259 contributes to the heme b binding site.

This sequence belongs to the peroxidase family. Peroxidase/catalase subfamily. In terms of assembly, homodimer or homotetramer. Heme b is required as a cofactor. In terms of processing, formation of the three residue Trp-Tyr-Met cross-link is important for the catalase, but not the peroxidase activity of the enzyme.

The catalysed reaction is H2O2 + AH2 = A + 2 H2O. It catalyses the reaction 2 H2O2 = O2 + 2 H2O. Bifunctional enzyme with both catalase and broad-spectrum peroxidase activity. The protein is Catalase-peroxidase of Persephonella marina (strain DSM 14350 / EX-H1).